Consider the following 299-residue polypeptide: Inosose dehydratase (299 aa).

Belongs to the IolE/MocC family. Glutathione serves as cofactor. The cofactor is Co(2+). Requires Mn(2+) as cofactor.

The catalysed reaction is scyllo-inosose = 3D-3,5/4-trihydroxycyclohexane-1,2-dione + H2O. Its function is as follows. Catalyzes the dehydration of inosose (2-keto-myo-inositol, 2KMI or 2,4,6/3,5-pentahydroxycyclohexanone) to 3D-(3,5/4)-trihydroxycyclohexane-1,2-dione (D-2,3-diketo-4-deoxy-epi-inositol). The chain is Inosose dehydratase from Klebsiella pneumoniae subsp. pneumoniae (strain ATCC 700721 / MGH 78578).